A 585-amino-acid polypeptide reads, in one-letter code: Cyclic nucleotide-binding domain-containing protein 2 (585 aa).

116-239 (SYRNYAEPLQ…DAQYRFEFFR (124 aa)) is an a nucleoside 3',5'-cyclic phosphate binding site.

It is found in the cytoplasm. The protein resides in the cytosol. In terms of biological role, essential for male fertility. Plays an important role in spermatogenesis and regulates sperm motility by controlling the development of the flagellar bending of sperm. The sequence is that of Cyclic nucleotide-binding domain-containing protein 2 (CNBD2) from Macaca fascicularis (Crab-eating macaque).